The primary structure comprises 63 residues: Prokaryotic ubiquitin-like protein Pup (63 aa).

The tract at residues 1-28 (MSDRQTQIPAGGGREDDHDDQVQSAGQV) is disordered. The tract at residues 19–57 (DDQVQSAGQVQVNTEGVDDLLDEIDGLLENNAEEFVRSY) is ARC ATPase binding. Residue Glu63 forms an Isoglutamyl lysine isopeptide (Glu-Lys) (interchain with K-? in acceptor proteins) linkage.

It belongs to the prokaryotic ubiquitin-like protein family. As to quaternary structure, strongly interacts with the proteasome-associated ATPase ARC through a hydrophobic interface; the interacting region of Pup lies in its C-terminal half. There is one Pup binding site per ARC hexamer ring.

Its pathway is protein degradation; proteasomal Pup-dependent pathway. Its function is as follows. Protein modifier that is covalently attached to lysine residues of substrate proteins, thereby targeting them for proteasomal degradation. The tagging system is termed pupylation. This is Prokaryotic ubiquitin-like protein Pup from Corynebacterium efficiens (strain DSM 44549 / YS-314 / AJ 12310 / JCM 11189 / NBRC 100395).